The sequence spans 861 residues: Linoleate 9S-lipoxygenase 2 (861 aa).

Positions N29–V160 constitute a PLAT domain. The Lipoxygenase domain maps to P163 to I861. Residues E212–S246 form a disordered region. Fe cation-binding residues include H522, H527, H713, N717, and I861.

Belongs to the lipoxygenase family. As to quaternary structure, monomer. The cofactor is Fe cation. As to expression, highly expressed in tubers and roots. Detected in flower buds and leaves.

It is found in the cytoplasm. It catalyses the reaction (9Z,12Z)-octadecadienoate + O2 = (9S)-hydroperoxy-(10E,12Z)-octadecadienoate. The protein operates within lipid metabolism; oxylipin biosynthesis. In terms of biological role, plant lipoxygenases may be involved in a number of diverse aspects of plant physiology including growth and development, pest resistance, and senescence or responses to wounding. Catalyzes the hydroperoxidation of lipids containing a cis,cis-1,4-pentadiene structure. Linoleic acid is the preferred substrate, but is also active with linolenic and arachidonic acids. This chain is Linoleate 9S-lipoxygenase 2 (LOX1.2), found in Solanum tuberosum (Potato).